Reading from the N-terminus, the 350-residue chain is MAGVQTLGRARGSTWTWRPVARDVLLARAFHSCTELEGRFYLVGGLLEGGARVPSNDTVIFDPAVGQAVRLVARGSPLRSHHDAALVGGRWLCVVGGWDGSRRLSTVAALDTEREVWEAWAANPGNCPPAGLSSHTCTRLSDGELRVSGREGGTHTQRRYGSIYTLKLDHRTRTYCYKEEGCHTTSRSGHCAALLPTAGPHPGHQLLLFGGCNSVGPEVAGQWSPGKIKEEQPVAPHLREQLARLVSSGQGLQQGPQSLRHHSCSVVGPFAVLFGGETLTRARDTICNDLYIYDTRKSPPLWFHFPSTDRGLKRVGHRTCLWNDQLYLVGGFGEDGRTASPQVCILEFFI.

Kelch repeat units follow at residues 39 to 89 (RFYL…LVGG), 91 to 137 (WLCV…SHTC), and 325 to 350 (QLYL…EFFI).

Interacts with CCNA1.

The polypeptide is Kelch domain-containing protein 9 (Klhdc9) (Mus musculus (Mouse)).